The chain runs to 257 residues: Glucanase inhibitor protein 1 (257 aa).

An N-terminal signal peptide occupies residues 1–28; sequence MKVFPALTSALVALGTAGVEAEHVQRSL. In terms of domain architecture, Peptidase S1 spans 29–256; the sequence is VMGGGTVPVG…GLEWINSVIK (228 aa). Cysteines 56 and 72 form a disulfide. Asn-107 and Asn-180 each carry an N-linked (GlcNAc...) asparagine glycan. 2 disulfide bridges follow: Cys-181/Cys-191 and Cys-201/Cys-232. An N-linked (GlcNAc...) asparagine glycan is attached at Asn-213.

It belongs to the peptidase S1 family. As to quaternary structure, interacts with host endoglucanases EGaseA.

Its subcellular location is the secreted. Its function is as follows. Secreted effector that suppresses host plant glucan elicitor-mediated defense responses. Targets host endoglucanase EGaseA and inhibits the EGaseA-mediated release of elicitor-active glucan oligosaccharides from P.sojae cell walls. The chain is Glucanase inhibitor protein 1 from Phytophthora sojae (Soybean stem and root rot agent).